The chain runs to 553 residues: Glycerol kinase 2 (553 aa).

Thr20 contacts substrate. ATP is bound at residue Arg24. Substrate contacts are provided by Arg94, Tyr148, and Asp259. Residues Thr281, Gly326, and 427 to 431 contribute to the ATP site; that span reads GMTNN. The chain crosses the membrane as a helical span at residues 526 to 546; that stretch reads IFSSMPLGFFIVSSMVMLIGA.

The protein belongs to the FGGY kinase family. Interacts with ARMC12 and PLD6.

It localises to the mitochondrion outer membrane. Its subcellular location is the cytoplasm. It carries out the reaction glycerol + ATP = sn-glycerol 3-phosphate + ADP + H(+). It participates in polyol metabolism; glycerol degradation via glycerol kinase pathway; sn-glycerol 3-phosphate from glycerol: step 1/1. In terms of biological role, key enzyme in the regulation of glycerol uptake and metabolism. Essential for male fertility and sperm mitochondrial sheath formation. Required for proper arrangement of crescent-like mitochondria to form the mitochondrial sheath during spermatogenesis. Can induce mitochondrial clustering through interactions with PLD6 and up-regulation of phosphatidic acid synthesis in the mitochondria. The chain is Glycerol kinase 2 (GK2) from Macaca fascicularis (Crab-eating macaque).